Here is a 223-residue protein sequence, read N- to C-terminus: Ribosomal RNA small subunit methyltransferase G (223 aa).

S-adenosyl-L-methionine contacts are provided by residues G83, L88, 134 to 135 (AE), and R152.

This sequence belongs to the methyltransferase superfamily. RNA methyltransferase RsmG family.

It localises to the cytoplasm. Functionally, specifically methylates the N7 position of guanine in position 518 of 16S rRNA. The protein is Ribosomal RNA small subunit methyltransferase G of Corynebacterium diphtheriae (strain ATCC 700971 / NCTC 13129 / Biotype gravis).